A 278-amino-acid polypeptide reads, in one-letter code: Putative ABC transporter ATP-binding protein MTBMA_c05830 (278 aa).

Residues 4–239 form the ABC transporter domain; the sequence is IEAVNIRYTY…IDTIRGADLR (236 aa). 37–44 is an ATP binding site; sequence GPNGAGKS.

The protein belongs to the ABC transporter superfamily.

It is found in the cell membrane. Functionally, probably part of an ABC transporter complex. Responsible for energy coupling to the transport system. This chain is Putative ABC transporter ATP-binding protein MTBMA_c05830, found in Methanothermobacter marburgensis (strain ATCC BAA-927 / DSM 2133 / JCM 14651 / NBRC 100331 / OCM 82 / Marburg) (Methanobacterium thermoautotrophicum).